Reading from the N-terminus, the 571-residue chain is Septation ring formation regulator EzrA (571 aa).

Residues 1 to 3 (MYY) lie on the Extracellular side of the membrane. The helical transmembrane segment at 4–22 (MLIGFIIVVIAVIGAGYIL) threads the bilayer. Residues 23-571 (KRKHYQRINE…ESKVSVDDIE (549 aa)) are Cytoplasmic-facing. Coiled-coil stretches lie at residues 248–298 (LAQM…DTLE), 326–374 (DALA…ASGE), 400–437 (KFAE…ERER), and 478–529 (RIAE…ENHF).

Belongs to the EzrA family.

The protein localises to the cell membrane. Functionally, negative regulator of FtsZ ring formation; modulates the frequency and position of FtsZ ring formation. Inhibits FtsZ ring formation at polar sites. Interacts either with FtsZ or with one of its binding partners to promote depolymerization. The polypeptide is Septation ring formation regulator EzrA (Listeria monocytogenes serovar 1/2a (strain ATCC BAA-679 / EGD-e)).